The primary structure comprises 487 residues: Catalase (487 aa).

Positions Met1–Ser20 are disordered. Catalysis depends on residues His54 and Asn127. Tyr337 is a binding site for heme.

It belongs to the catalase family. The cofactor is heme.

The catalysed reaction is 2 H2O2 = O2 + 2 H2O. Functionally, decomposes hydrogen peroxide into water and oxygen; serves to protect cells from the toxic effects of hydrogen peroxide. This chain is Catalase (katA), found in Streptomyces coelicolor (strain ATCC BAA-471 / A3(2) / M145).